The primary structure comprises 292 residues: MNYAKEINALNNSLSDLKGDINVSFEFFPPKNEQMETMLWDSIHRLQTLHPKFVSVTYGANSGERDRTHGIVKRIKQETGLEAAPHLTGIDASPDELRQIAKDYWDSGIRRIVALRGDEPAGYEKKPFYAEDLVKLLRSVADFDISVAAYPEVHPEAKSAQADLINLKRKIDAGANHVITQFFFDVERYLRFRDRCVMLGIDVEIVPGILPVTNFKQLGKMAQVTNVKIPSWLSQMYEGLDDDQGTRNLVAASIAIDMVKVLSREGVKDFHFYTLNRSELTYAICHILGVRP.

Catalysis depends on E26, which acts as the Proton donor/acceptor. T57 is an NADH binding site. The FAD site is built by Y58, A60, H86, R116, G117, D118, A130, Y150, H154, A157, D163, N166, R169, and K170. D118 contacts (6S)-5-methyl-5,6,7,8-tetrahydrofolate. Q181 is an NADH binding site. (6S)-5-methyl-5,6,7,8-tetrahydrofolate contacts are provided by Q181, Q217, and R277.

It belongs to the methylenetetrahydrofolate reductase family. Requires FAD as cofactor.

It carries out the reaction (6S)-5-methyl-5,6,7,8-tetrahydrofolate + NAD(+) = (6R)-5,10-methylene-5,6,7,8-tetrahydrofolate + NADH + H(+). Its pathway is one-carbon metabolism; tetrahydrofolate interconversion. The protein operates within amino-acid biosynthesis; L-methionine biosynthesis via de novo pathway. Functionally, catalyzes the NADH-dependent reduction of 5,10-methylenetetrahydrofolate to 5-methyltetrahydrofolate. Is required to provide the methyl group necessary for methionine synthetase to convert homocysteine to methionine; the methyl group is given by 5-methyltetrahydrofolate. The polypeptide is 5,10-methylenetetrahydrofolate reductase (metF) (Neisseria meningitidis serogroup B (strain ATCC BAA-335 / MC58)).